Consider the following 396-residue polypeptide: MLSPALLKVSLNRRSSAPVPQDEKMMFHSRNRAASYLQPMIEDQELIGFNRDRRRSSGSIIVDSFELGNASPSRRGSIASGIPMDKKTRRKLSNPVSLHQYTEDPTLAWEMLKEKRPVKPVRQMRLDTPVKPDHVRFVCIGCTHGEQFDISKLPPGDVLLVAGDFTSCGLPNEVHNFNKLLGKLKYSYKVVIGGNHECTFDDTFLKLKQESEPKEMALKQALLSAIHSDSKGGISAKDLLSNAIYLEDNVIELFGITIYGTPWQPKVDNWAFNLSRGQQLLDKWNLIPAGVDVLLTHTPPLGHGDMMNNGQRMGCAELLNTVFKRVRPKYHVFGHIHEGYGCTTDGYTKFINCCMCNENLDLKNEPVIFDIPVHPHTKQFYIQNVKKIHKRFQKKK.

The segment at serine 73–asparagine 94 is disordered.

Belongs to the UPF0046 family.

This chain is UPF0046 protein T07D4.2, found in Caenorhabditis elegans.